Here is a 348-residue protein sequence, read N- to C-terminus: Rhodopsin (348 aa).

The Extracellular portion of the chain corresponds to 1-33; it reads TEGPFFYIPMVNTSGVVRSPYEYPQYYLVNPAA. N-linked (GlcNAc...) asparagine glycosylation is present at Asn12. The chain crosses the membrane as a helical span at residues 34–58; sequence YAILGAYMFFLIIIGFPVNFMTLYV. Topologically, residues 59–70 are cytoplasmic; that stretch reads TLEHKKLRTPLN. Residues 71–93 traverse the membrane as a helical segment; sequence YILLNLAVADLFMVIGGFTTTMY. The Extracellular segment spans residues 94–107; sequence SSMHGYFVLGRLGC. The cysteines at positions 107 and 184 are disulfide-linked. The chain crosses the membrane as a helical span at residues 108 to 130; the sequence is NMEGFSATLGGMISLWSLAVLAI. The short motif at 131 to 133 is the 'Ionic lock' involved in activated form stabilization element; it reads ERW. At 131 to 149 the chain is on the cytoplasmic side; it reads ERWVVVCKPISNFRFGENH. Residues 150 to 170 form a helical membrane-spanning segment; that stretch reads AIMGVSLTWFMALACTVPPLV. The Extracellular segment spans residues 171–199; the sequence is GWSRYIPEGMQCSCGIDYYTRAEGFNNES. Asn197 is a glycosylation site (N-linked (GlcNAc...) asparagine). Residues 200-221 form a helical membrane-spanning segment; it reads FVLYMFFCHFLVPLVIIFFCYG. Over 222 to 249 the chain is Cytoplasmic; that stretch reads RLLCAVKEAAAAQQESETTQRAEREVTR. A helical membrane pass occupies residues 250–271; that stretch reads MVIIMVIGFLVCWLPYASVAWF. Topologically, residues 272–283 are extracellular; sequence IFTHQGSEFGPL. A helical membrane pass occupies residues 284 to 305; the sequence is FMTIPAFFAKSSSIYNPMIYIC. N6-(retinylidene)lysine is present on Lys293. Over 306–348 the chain is Cytoplasmic; sequence MNKQFRNCMITTLFCGKNPFEGEEEGASSTKTEASSASSVSPA. The S-palmitoyl cysteine moiety is linked to residue Cys320. Residues 327–348 are disordered; it reads GEEEGASSTKTEASSASSVSPA. A compositionally biased stretch (low complexity) spans 332-348; that stretch reads ASSTKTEASSASSVSPA.

It belongs to the G-protein coupled receptor 1 family. Opsin subfamily. In terms of processing, phosphorylated on some or all of the serine and threonine residues present in the C-terminal region. Post-translationally, contains one covalently linked retinal chromophore.

The protein localises to the membrane. It localises to the cell projection. The protein resides in the cilium. Its subcellular location is the photoreceptor outer segment. Photoreceptor required for image-forming vision at low light intensity. While most salt water fish species use retinal as chromophore, most freshwater fish use 3-dehydroretinal, or a mixture of retinal and 3-dehydroretinal. Light-induced isomerization of 11-cis to all-trans retinal triggers a conformational change that activates signaling via G-proteins. Subsequent receptor phosphorylation mediates displacement of the bound G-protein alpha subunit by arrestin and terminates signaling. The sequence is that of Rhodopsin (rho) from Sargocentron punctatissimum (Speckled squirrelfish).